A 118-amino-acid chain; its full sequence is Large ribosomal subunit protein uL18 (118 aa).

The disordered stretch occupies residues 1 to 24 (MISKPDKNKIRQKRHRRVRGKLSG). Over residues 10 to 20 (IRQKRHRRVRG) the composition is skewed to basic residues.

The protein belongs to the universal ribosomal protein uL18 family. Part of the 50S ribosomal subunit; part of the 5S rRNA/L5/L18/L25 subcomplex. Contacts the 5S and 23S rRNAs.

This is one of the proteins that bind and probably mediate the attachment of the 5S RNA into the large ribosomal subunit, where it forms part of the central protuberance. The protein is Large ribosomal subunit protein uL18 of Streptococcus mutans serotype c (strain ATCC 700610 / UA159).